Reading from the N-terminus, the 175-residue chain is Ribosome maturation factor RimM (175 aa).

One can recognise a PRC barrel domain in the interval 98-175; it reads EGEYYWHQLE…EMRVDWDADF (78 aa).

Belongs to the RimM family. As to quaternary structure, binds ribosomal protein uS19.

Its subcellular location is the cytoplasm. Functionally, an accessory protein needed during the final step in the assembly of 30S ribosomal subunit, possibly for assembly of the head region. Essential for efficient processing of 16S rRNA. May be needed both before and after RbfA during the maturation of 16S rRNA. It has affinity for free ribosomal 30S subunits but not for 70S ribosomes. In Pseudomonas aeruginosa (strain UCBPP-PA14), this protein is Ribosome maturation factor RimM.